An 882-amino-acid polypeptide reads, in one-letter code: Alanine--tRNA ligase (882 aa).

Zn(2+) is bound by residues H568, H572, C670, and H674.

This sequence belongs to the class-II aminoacyl-tRNA synthetase family. Requires Zn(2+) as cofactor.

Its subcellular location is the cytoplasm. The catalysed reaction is tRNA(Ala) + L-alanine + ATP = L-alanyl-tRNA(Ala) + AMP + diphosphate. Catalyzes the attachment of alanine to tRNA(Ala) in a two-step reaction: alanine is first activated by ATP to form Ala-AMP and then transferred to the acceptor end of tRNA(Ala). Also edits incorrectly charged Ser-tRNA(Ala) and Gly-tRNA(Ala) via its editing domain. This is Alanine--tRNA ligase from Syntrophotalea carbinolica (strain DSM 2380 / NBRC 103641 / GraBd1) (Pelobacter carbinolicus).